The sequence spans 143 residues: uncharacterized protein (143 aa).

Residues 5–137 (DARLASDLSL…LRNAADLILE (133 aa)) enclose the HTH marR-type domain. A DNA-binding region (H-T-H motif) is located at residues 51–74 (PGALAIRERVRPPSMTRVIASLAD).

Homodimer.

This is an uncharacterized protein from Mycobacterium leprae (strain TN).